A 169-amino-acid chain; its full sequence is Queuosine precursor transporter QueT (169 aa).

Helical transmembrane passes span I9 to S29, L44 to I64, V73 to F93, F110 to F130, and L137 to I157.

It belongs to the vitamin uptake transporter (VUT/ECF) (TC 2.A.88) family. In E.coli forms a stable energy-coupling factor (ECF) transporter complex composed of 2 membrane-embedded substrate-binding protein (S component), 2 ATP-binding proteins (A and A' components) and 2 transmembrane proteins (T component), probably with a stoichiometry of 2:1:1:2. May be able to interact with more than 1 S component at a time.

Its subcellular location is the cell membrane. In terms of biological role, probably a queuosine precursor-binding protein that interacts with the energy-coupling factor (ECF) ABC-transporter complex. Unlike classic ABC transporters this ECF transporter provides the energy necessary to transport a number of different substrates. The substrates themselves are bound by transmembrane, not extracytoplasmic soluble proteins. This chain is Queuosine precursor transporter QueT (queT), found in Lactococcus lactis subsp. cremoris (strain MG1363).